We begin with the raw amino-acid sequence, 450 residues long: Bifunctional apoptosis regulator (450 aa).

The segment at 1 to 20 is disordered; sequence MEEPQKSYVNTMDLERDEPL. The Cytoplasmic portion of the chain corresponds to 1–140; that stretch reads MEEPQKSYVN…PNTGRANQQM (140 aa). Residues 34–74 form an RING-type zinc finger; sequence CHCCYDILVNPTTLNCGHSFCRHCLALWWASSKKTECPECR. Residues 141–161 form a helical membrane-spanning segment; sequence GGGFFSGVLTALTGVAVVLLV. Over 162–331 the chain is Lumenal; the sequence is YHWSSRESEH…KEPTWKQWRE (170 aa). Residues 182–249 enclose the SAM domain; it reads WTAEEVVLWL…LMELERVKAL (68 aa). N-linked (GlcNAc...) asparagine glycosylation is present at N232. Residues 332–352 traverse the membrane as a helical segment; it reads FLVKYSFLPYQLIAEFAWDWL. The Cytoplasmic portion of the chain corresponds to 353–360; sequence EVHYWTSR. The chain crosses the membrane as a helical span at residues 361-381; that stretch reads FLIINAMLLSVLELFSFWRIW. At 382 to 404 the chain is on the lumenal side; sequence SRSELKTVPQRMWSHFWKVSTQG. The helical transmembrane segment at 405 to 425 threads the bilayer; sequence LFVAMFWPLIPQFVCNCLFYW. The Cytoplasmic portion of the chain corresponds to 426–450; sequence ALYFNPIINIDLVVKELRRLETQVL.

As to quaternary structure, interacts with CASP8, BCL2 and BCL2L1 through SAM domain and also with HIP1, IFT57, ESRRBL1 and BCAP31. Interacts with NGFR; this interaction inhibits NF-kappa-B and JNK-related signaling pathways. In terms of processing, mediates RING-dependent self-ubiquitination leading to proteasomal degradation. In terms of tissue distribution, expressed highly in brain, moderately in small intestine, weakly in testes and only faintly in liver and skeletal muscle. Not expressed in heart, kidney, lung and spleen.

It is found in the endoplasmic reticulum membrane. The catalysed reaction is S-ubiquitinyl-[E2 ubiquitin-conjugating enzyme]-L-cysteine + [acceptor protein]-L-lysine = [E2 ubiquitin-conjugating enzyme]-L-cysteine + N(6)-ubiquitinyl-[acceptor protein]-L-lysine.. Membrane-bound E3 ubiquitin ligase that plays a role in several processes including apoptosis regulation or reticulum endoplasmic stress. Has anti-apoptotic activity, both for apoptosis triggered via death-receptors and via mitochondrial factors. Contributes to the dynamic control of IRE1/ERN1 signaling during ER stress by inducing BAX inhibitor 1/TMBIM6 proteasomal degradation. Promotes the activation of TGF-beta signaling by mediating the 'Lys-63'-linked ubiquitination of TGFBR1 which is critical to activate the pathway. Together with NGFR, negatively regulates NF-kappa-B and JNK-related signaling pathways. Promotes the proteasome-mediated degradation of PNPLA3, a protein involveld in lipid metabolism. The sequence is that of Bifunctional apoptosis regulator (BFAR) from Homo sapiens (Human).